A 32-amino-acid chain; its full sequence is Periplasmic [NiFeSe] hydrogenase small subunit (32 aa).

[4Fe-4S] cluster contacts are provided by cysteine 18 and cysteine 21.

This sequence belongs to the [NiFe]/[NiFeSe] hydrogenase small subunit family. Heterodimer of a large and a small subunit. The cofactor is [3Fe-4S] cluster. [4Fe-4S] cluster is required as a cofactor.

The protein localises to the periplasm. The catalysed reaction is H2 + A = AH2. The protein is Periplasmic [NiFeSe] hydrogenase small subunit of Desulfomicrobium norvegicum (strain DSM 1741 / NCIMB 8310) (Desulfovibrio baculatus (strain Norway 4)).